The sequence spans 502 residues: Thermosome subunit beta (502 aa).

Belongs to the TCP-1 chaperonin family. In terms of assembly, forms a Heterooligomeric complex of two stacked eight-membered rings.

Molecular chaperone; binds unfolded polypeptides in vitro, and has a weak ATPase activity. This is Thermosome subunit beta (thsB) from Desulfurococcus mucosus (Desulfurococcus mobilis).